The sequence spans 381 residues: Cyclin-dependent kinase inhibitor CIP1 (381 aa).

Basic residues predominate over residues 1-11 (MLLERLHKRLH). A disordered region spans residues 1–30 (MLLERLHKRLHAGSSRRSQENKDKNCKPED). Over residues 17–30 (RSQENKDKNCKPED) the composition is skewed to basic and acidic residues. Phosphothreonine is present on residues Thr-65, Thr-69, and Thr-73.

In terms of assembly, interact with the CDC28/CLN2 complex. Post-translationally, phosphorylated during S phase in a CDC28-dependent manner. Phosphorylated at Thr-65 and Thr-73 by HOG1 under osmotic stress. The phosphorylations of Thr-65 and Thr-73 are necessary for CIP1-induced growth inhibition.

It is found in the cytoplasm. The protein resides in the nucleus. Functionally, acts as an inhibitor of the CDC28/CLN2 cyclin-dependent kinase complex. Stabilizes the CDC28 inhibitor SIC1. Negatively regulates the G1/S phase transition. Contributes to osmostress-induced transitory G1 delay. The protein is Cyclin-dependent kinase inhibitor CIP1 of Saccharomyces cerevisiae (strain ATCC 204508 / S288c) (Baker's yeast).